Reading from the N-terminus, the 215-residue chain is Urease accessory protein UreG (215 aa).

Position 15–22 (15–22) interacts with GTP; that stretch reads GPVGSGKT.

It belongs to the SIMIBI class G3E GTPase family. UreG subfamily. As to quaternary structure, homodimer. UreD, UreF and UreG form a complex that acts as a GTP-hydrolysis-dependent molecular chaperone, activating the urease apoprotein by helping to assemble the nickel containing metallocenter of UreC. The UreE protein probably delivers the nickel.

Its subcellular location is the cytoplasm. Its function is as follows. Facilitates the functional incorporation of the urease nickel metallocenter. This process requires GTP hydrolysis, probably effectuated by UreG. The chain is Urease accessory protein UreG from Alcanivorax borkumensis (strain ATCC 700651 / DSM 11573 / NCIMB 13689 / SK2).